The primary structure comprises 43 residues: Neurotrophin-3 (43 aa).

This sequence belongs to the NGF-beta family.

The protein localises to the secreted. In terms of biological role, seems to promote the survival of visceral and proprioceptive sensory neurons. The sequence is that of Neurotrophin-3 (ntf3) from Raja clavata (Thornback ray).